Reading from the N-terminus, the 171-residue chain is Signal peptidase complex catalytic subunit SEC11 (171 aa).

Topologically, residues 1 to 6 (MNIRQQ) are cytoplasmic. A helical; Signal-anchor for type II membrane protein membrane pass occupies residues 7-24 (LVQLLNLAMVLSTAFMFW). The Lumenal portion of the chain corresponds to 25–171 (KGLGLVTNSN…MALSTLLTRE (147 aa)). Active-site charge relay system residues include Ser44, His83, and Asp113. Positions 157–168 (GLLGLMALSTLL) are C-terminal short (CTS) helix.

It belongs to the peptidase S26B family. Component of the signal peptidase complex (SPC) composed of a catalytic subunit SEC11 and three accessory subunits SPC1, SPC2 and SPC3. The complex induces a local thinning of the ER membrane which is used to measure the length of the signal peptide (SP) h-region of protein substrates. This ensures the selectivity of the complex towards h-regions shorter than 18-20 amino acids. SPC associates with the translocon complex.

The protein resides in the endoplasmic reticulum membrane. The catalysed reaction is Cleavage of hydrophobic, N-terminal signal or leader sequences from secreted and periplasmic proteins.. Its function is as follows. Catalytic component of the signal peptidase complex (SPC) which catalyzes the cleavage of N-terminal signal sequences from nascent proteins as they are translocated into the lumen of the endoplasmic reticulum. Specifically cleaves N-terminal signal peptides that contain a hydrophobic alpha-helix (h-region) shorter than 18-20 amino acids. This chain is Signal peptidase complex catalytic subunit SEC11 (SEC11), found in Komagataella phaffii (strain GS115 / ATCC 20864) (Yeast).